The sequence spans 404 residues: Probable tRNA sulfurtransferase (404 aa).

The THUMP domain maps to 60-165 (HEVAESLKEI…DEAAYISYEN (106 aa)). ATP-binding positions include 183-184 (ML), 208-209 (HF), arginine 265, glycine 287, and glutamine 296.

Belongs to the ThiI family.

It is found in the cytoplasm. It catalyses the reaction [ThiI sulfur-carrier protein]-S-sulfanyl-L-cysteine + a uridine in tRNA + 2 reduced [2Fe-2S]-[ferredoxin] + ATP + H(+) = [ThiI sulfur-carrier protein]-L-cysteine + a 4-thiouridine in tRNA + 2 oxidized [2Fe-2S]-[ferredoxin] + AMP + diphosphate. It carries out the reaction [ThiS sulfur-carrier protein]-C-terminal Gly-Gly-AMP + S-sulfanyl-L-cysteinyl-[cysteine desulfurase] + AH2 = [ThiS sulfur-carrier protein]-C-terminal-Gly-aminoethanethioate + L-cysteinyl-[cysteine desulfurase] + A + AMP + 2 H(+). It participates in cofactor biosynthesis; thiamine diphosphate biosynthesis. Its function is as follows. Catalyzes the ATP-dependent transfer of a sulfur to tRNA to produce 4-thiouridine in position 8 of tRNAs, which functions as a near-UV photosensor. Also catalyzes the transfer of sulfur to the sulfur carrier protein ThiS, forming ThiS-thiocarboxylate. This is a step in the synthesis of thiazole, in the thiamine biosynthesis pathway. The sulfur is donated as persulfide by IscS. The chain is Probable tRNA sulfurtransferase from Streptococcus agalactiae serotype Ia (strain ATCC 27591 / A909 / CDC SS700).